Here is a 956-residue protein sequence, read N- to C-terminus: Nitrogen regulatory protein NUT1 (956 aa).

Residues 1–12 (MNPTITEHDFRF) show a composition bias toward basic and acidic residues. Disordered regions lie at residues 1-51 (MNPT…NDAQ), 120-222 (QQEE…PAAA), 240-262 (KTSI…FQVP), 348-373 (GQSI…SQVS), and 524-661 (TLPG…DAPT). The span at 15–37 (RPAAPGRDPGSDSSDDPLPASLR) shows a compositional bias: low complexity. 4 stretches are compositionally biased toward polar residues: residues 42–51 (DRQSAFNDAQ), 131–153 (PLKT…QKKS), 167–194 (SHGS…NAIS), and 208–217 (AAQSQFNPQS). Over residues 588–613 (NASTTAIPNSQMQYEQQGVQGHTNSP) the composition is skewed to polar residues. Low complexity-rich tracts occupy residues 623–633 (SGFSSVVHSRP) and 640–661 (SKNG…DAPT). The GATA-type zinc finger occupies 663-687 (CTNCATQTTPLWRRNPEGQPLCNAC). The segment at 708–890 (KKRNRGSGSN…AATRPSGFGT (183 aa)) is disordered. Residues 713-760 (GSGSNVPGATSGSRSKKGATSTAVSGTNTRKNSSLAISRTASTTNVQV) are compositionally biased toward polar residues. Over residues 812-839 (VVPIAAAPPKNMPGPGAAAAARTVALGP) the composition is skewed to low complexity. 2 stretches are compositionally biased toward polar residues: residues 849–863 (SPAN…NANH) and 872–881 (PENSTGSNEA).

It localises to the nucleus. Its function is as follows. Major nitrogen regulatory protein; activates expression of nitrogen-regulated genes. The protein is Nitrogen regulatory protein NUT1 (NUT1) of Pyricularia oryzae (strain 70-15 / ATCC MYA-4617 / FGSC 8958) (Rice blast fungus).